Reading from the N-terminus, the 275-residue chain is Ribosomal RNA small subunit methyltransferase A (275 aa).

The S-adenosyl-L-methionine site is built by N21, L23, G48, E69, D94, and N115.

Belongs to the class I-like SAM-binding methyltransferase superfamily. rRNA adenine N(6)-methyltransferase family. RsmA subfamily.

The protein localises to the cytoplasm. It catalyses the reaction adenosine(1518)/adenosine(1519) in 16S rRNA + 4 S-adenosyl-L-methionine = N(6)-dimethyladenosine(1518)/N(6)-dimethyladenosine(1519) in 16S rRNA + 4 S-adenosyl-L-homocysteine + 4 H(+). Specifically dimethylates two adjacent adenosines (A1518 and A1519) in the loop of a conserved hairpin near the 3'-end of 16S rRNA in the 30S particle. May play a critical role in biogenesis of 30S subunits. This chain is Ribosomal RNA small subunit methyltransferase A, found in Clostridium botulinum (strain Loch Maree / Type A3).